The primary structure comprises 607 residues: Bifunctional lysine-specific demethylase and histidyl-hydroxylase NO66 (607 aa).

Disordered regions lie at residues 23 to 121 (GPTI…IKTN) and 139 to 184 (ATQH…GEVE). The span at 25 to 37 (TIQQTGATKTPKT) shows a compositional bias: polar residues. The span at 39–58 (SKIRRLSIRKSTRKIKHALK) shows a compositional bias: basic residues. The segment covering 156-167 (DKTPVKRVRSDT) has biased composition (basic and acidic residues). Positions 188–405 (EEAEKMFEWL…DLMEKLVPAA (218 aa)) constitute a JmjC domain. Residues His328, Asp330, and His371 each coordinate Fe cation.

The protein belongs to the ROX family. NO66 subfamily. The cofactor is Fe(2+).

It is found in the nucleus. It catalyses the reaction L-histidyl-[protein] + 2-oxoglutarate + O2 = (3S)-3-hydroxy-L-histidyl-[protein] + succinate + CO2. The catalysed reaction is N(6),N(6)-dimethyl-L-lysyl(36)-[histone H3] + 2 2-oxoglutarate + 2 O2 = L-lysyl(36)-[histone H3] + 2 formaldehyde + 2 succinate + 2 CO2. Oxygenase that can act as both a histone lysine demethylase and a ribosomal histidine hydroxylase. Specifically demethylates 'Lys-4' (H3K4me) and 'Lys-36' (H3K36me) of histone H3, thereby playing a central role in histone code. Also catalyzes the hydroxylation of 60S ribosomal protein L8. The polypeptide is Bifunctional lysine-specific demethylase and histidyl-hydroxylase NO66 (Branchiostoma floridae (Florida lancelet)).